A 561-amino-acid chain; its full sequence is uncharacterized protein (561 aa).

The signal sequence occupies residues Met1–Cys24. Topologically, residues Lys25–Gln509 are lumenal. Residues Tyr510–Asn530 traverse the membrane as a helical segment. Residues Arg531 to Asp561 are Cytoplasmic-facing.

Its subcellular location is the endoplasmic reticulum membrane. The protein resides in the golgi apparatus membrane. This is an uncharacterized protein from Schizosaccharomyces pombe (strain 972 / ATCC 24843) (Fission yeast).